A 167-amino-acid chain; its full sequence is Aphrodisin (167 aa).

Positions 1–16 are cleaved as a signal peptide; that stretch reads MVKILVLALVFSLAHA. Q17 is subject to Pyrrolidone carboxylic acid. 2 disulfides stabilise this stretch: C54–C58 and C73–C165. N57 and N85 each carry an N-linked (GlcNAc...) asparagine glycan.

It belongs to the calycin superfamily. Lipocalin family. In terms of tissue distribution, expressed in the vagina, uterus, and Bartholin's glands of female hamsters. Secreted in vaginal discharge.

It is found in the secreted. Its function is as follows. Acts as an aphrodisiac pheromone, reliably eliciting copulatory behavior from male hamster. The polypeptide is Aphrodisin (Mesocricetus auratus (Golden hamster)).